The chain runs to 210 residues: Eukaryotic translation initiation factor 2 subunit gamma (210 aa).

The 196-residue stretch at 1-196 folds into the tr-type G domain; the sequence is IGHVAHGKST…HLVETITPPR (196 aa). The tract at residues 2 to 9 is G1; sequence GHVAHGKS. 5-10 is a GTP binding site; the sequence is AHGKST. Residues 30 to 34 are G2; the sequence is NITIK. The G3 stretch occupies residues 85–88; the sequence is DCPG. Residues 141–144 and 174–176 contribute to the GTP site; these read NKID and SAI. Positions 141–144 are G4; the sequence is NKID. The G5 stretch occupies residues 174 to 176; sequence SAI.

It belongs to the TRAFAC class translation factor GTPase superfamily. Classic translation factor GTPase family. EIF2G subfamily. In terms of assembly, eukaryotic translation initiation factor 2 eIF2 is a heterotrimeric complex composed of an alpha, a beta and a gamma subunit. The factors eIF-1, eIF-2, eIF-3, TIF5/eIF-5 and methionyl-tRNAi form a multifactor complex (MFC) that may bind to the 40S ribosome.

It is found in the cytoplasm. Its subcellular location is the cytosol. The enzyme catalyses GTP + H2O = GDP + phosphate + H(+). Functionally, as a subunit of eukaryotic initiation factor 2 eIF2, involved in the early steps of protein synthesis. In the presence of GTP, eIF-2 forms a ternary complex with initiator tRNA Met-tRNAi and then recruits the 40S ribosomal complex and initiation factors eIF-1, eIF-1A and eIF-3 to form the 43S pre-initiation complex (43S PIC), a step that determines the rate of protein translation. The 43S PIC binds to mRNA and scans downstream to the initiation codon, where it forms a 48S initiation complex by codon-anticodon base pairing. This leads to the displacement of eIF-1 to allow GTPase-activating protein (GAP) eIF-5-mediated hydrolysis of eIF2-bound GTP. Hydrolysis of GTP and release of Pi, which makes GTP hydrolysis irreversible, causes the release of the eIF-2-GDP binary complex from the 40S subunit, an event that is essential for the subsequent joining of the 60S ribosomal subunit to form an elongation-competent 80S ribosome. In order for eIF-2 to recycle and catalyze another round of initiation, the GDP bound to eIF-2 must be exchanged with GTP by way of a reaction catalyzed by GDP-GTP exchange factor (GEF) eIF-2B. In Spironucleus vortens, this protein is Eukaryotic translation initiation factor 2 subunit gamma.